Reading from the N-terminus, the 331-residue chain is Probable allantoicase (331 aa).

Belongs to the allantoicase family.

It catalyses the reaction allantoate + H2O = (S)-ureidoglycolate + urea. It participates in nitrogen metabolism; (S)-allantoin degradation; (S)-ureidoglycolate from allantoate (aminidohydrolase route): step 1/1. In Pseudomonas syringae pv. syringae (strain B728a), this protein is Probable allantoicase.